A 518-amino-acid chain; its full sequence is Xaa-Pro aminopeptidase 3 (518 aa).

A mitochondrion-targeting transit peptide spans 1–48; that stretch reads MNNICKLNKFIISKSSSSLSSTSSKIKTNCLIKNAKMFSSSLNLNRFY. Residues Y314, D345, D356, H434, H441, E461, and E485 each contribute to the substrate site. Mn(2+) is bound by residues D345, D356, and H434. Positions 461 and 485 each coordinate Mn(2+).

It belongs to the peptidase M24B family. Homodimer. The cofactor is Mn(2+).

The protein resides in the mitochondrion. It localises to the cytoplasm. It carries out the reaction Release of any N-terminal amino acid, including proline, that is linked to proline, even from a dipeptide or tripeptide.. Functionally, catalyzes the removal of a penultimate prolyl residue from the N-termini of peptides, such as Leu-Pro-Ala. Also shows low activity towards peptides with Ala or Ser at the P1 position. The protein is Xaa-Pro aminopeptidase 3 (xpnpep3) of Dictyostelium discoideum (Social amoeba).